We begin with the raw amino-acid sequence, 502 residues long: Glycerol kinase (502 aa).

Residue Thr-13 participates in ADP binding. The ATP site is built by Thr-13, Thr-14, and Ser-15. Thr-13 is a binding site for sn-glycerol 3-phosphate. Arg-17 is a binding site for ADP. Residues Arg-83, Glu-84, Tyr-135, and Asp-245 each contribute to the sn-glycerol 3-phosphate site. Residues Arg-83, Glu-84, Tyr-135, Asp-245, and Gln-246 each contribute to the glycerol site. 2 residues coordinate ADP: Thr-267 and Gly-310. Positions 267, 310, 314, and 411 each coordinate ATP. The ADP site is built by Gly-411 and Asn-415.

It belongs to the FGGY kinase family. In terms of assembly, homotetramer and homodimer (in equilibrium).

The catalysed reaction is glycerol + ATP = sn-glycerol 3-phosphate + ADP + H(+). Its pathway is polyol metabolism; glycerol degradation via glycerol kinase pathway; sn-glycerol 3-phosphate from glycerol: step 1/1. Activated by phosphorylation and inhibited by fructose 1,6-bisphosphate (FBP). Functionally, key enzyme in the regulation of glycerol uptake and metabolism. Catalyzes the phosphorylation of glycerol to yield sn-glycerol 3-phosphate. In Lactobacillus delbrueckii subsp. bulgaricus (strain ATCC BAA-365 / Lb-18), this protein is Glycerol kinase.